The chain runs to 400 residues: Glycine betaine/proline betaine transport system ATP-binding protein ProV (400 aa).

The ABC transporter domain occupies 29 to 265 (LSKEQILEKT…PANDYVRTFF (237 aa)). 61-68 (GLSGSGKS) serves as a coordination point for ATP. CBS domains lie at 280-341 (ARRS…GIEA) and 343-400 (LIDD…GNNG).

Belongs to the ABC transporter superfamily. As to quaternary structure, the complex is composed of two ATP-binding proteins (ProV), two transmembrane proteins (ProW) and a solute-binding protein (ProX).

The protein resides in the cell inner membrane. Its function is as follows. Part of the ProU ABC transporter complex involved in glycine betaine and proline betaine uptake. Probably responsible for energy coupling to the transport system. The sequence is that of Glycine betaine/proline betaine transport system ATP-binding protein ProV from Salmonella typhimurium (strain LT2 / SGSC1412 / ATCC 700720).